We begin with the raw amino-acid sequence, 371 residues long: MASVQLQNVTKAWGEVVVSKDINLDIHEGEFVVFVGPSGCGKSTLLRMIAGLETITSGDLFIGEKRMNDTPPAERGVGMVFQSYALYPHLSVAENMSFGLKLAGAKKEVINQRVNQVAEVLQLVHLLDRKPKALSGGQRQRVAIGRTLVAEPSVFLLDEPLSNLDAALRVQMRIEISRLHKRLGRTMIYVTHDQVEAMTLADKIVVLDAGRVAQVGKPLELYHYPADRFVAGFIGSPKMNFLPVKVTATAIDQVQVELPMPNRQQVWLPVESRDVQVGANMSLGIRPEHLLPSDIADVILEGEVQVVEQLGNETQIYIQIPSIRQNLVYRQNDVVLVEEGATFAIGLPPERCHLFREDGTACRRLHKEPGV.

An ABC transporter domain is found at 4 to 234; that stretch reads VQLQNVTKAW…PADRFVAGFI (231 aa). ATP is bound at residue 36–43; that stretch reads GPSGCGKS.

This sequence belongs to the ABC transporter superfamily. Maltooligosaccharide importer (TC 3.A.1.1.1) family. As to quaternary structure, the complex is composed of two ATP-binding proteins (MalK), two transmembrane proteins (MalG and MalK) and a solute-binding protein (MalE).

The protein localises to the cell inner membrane. It catalyses the reaction D-maltose(out) + ATP + H2O = D-maltose(in) + ADP + phosphate + H(+). In terms of biological role, part of the ABC transporter complex MalEFGK involved in maltose/maltodextrin import. Responsible for energy coupling to the transport system. The polypeptide is Maltose/maltodextrin import ATP-binding protein MalK (Shigella flexneri serotype 5b (strain 8401)).